Consider the following 131-residue polypeptide: UPF0102 protein YraN (131 aa).

Residues 1-19 are compositionally biased toward polar residues; the sequence is MATVPTRSGSPRQLTTKQT. A disordered region spans residues 1-21; sequence MATVPTRSGSPRQLTTKQTGD.

Belongs to the UPF0102 family.

The chain is UPF0102 protein YraN from Shigella flexneri serotype 5b (strain 8401).